The primary structure comprises 90 residues: Molybdopterin synthase sulfur carrier subunit (90 aa).

A 1-thioglycine; alternate modification is found at G90. G90 carries the post-translational modification Glycyl adenylate; alternate.

It belongs to the MoaD family. MOCS2A subfamily. In terms of assembly, heterotetramer; composed of 2 small (Mocs2A) and 2 large (Mocs2B) subunits. C-terminal thiocarboxylation occurs in 2 steps, it is first acyl-adenylated (-COAMP) via the hesA/moeB/thiF part of MOCS3, then thiocarboxylated (-COSH) via the rhodanese domain of MOCS3.

It localises to the cytoplasm. Its pathway is cofactor biosynthesis; molybdopterin biosynthesis. Functionally, acts as a sulfur carrier required for molybdopterin biosynthesis. Component of the molybdopterin synthase complex that catalyzes the conversion of precursor Z into molybdopterin by mediating the incorporation of 2 sulfur atoms into precursor Z to generate a dithiolene group. In the complex, serves as sulfur donor by being thiocarboxylated (-COSH) at its C-terminus by MOCS3. After interaction with Mocs2B, the sulfur is then transferred to precursor Z to form molybdopterin. The sequence is that of Molybdopterin synthase sulfur carrier subunit from Drosophila simulans (Fruit fly).